The primary structure comprises 218 residues: Ornithine decarboxylase antizyme 2 (218 aa).

The protein belongs to the ODC antizyme family. Interacts with ODC1 and thereby sterically blocks ODC homodimerization. Expressed ubiquitously in 24 hours embryos, with highest levels in telencephalon, lens, retina, cerebellum and hindbrain primordia.

In terms of biological role, ornithine decarboxylase (ODC) antizyme protein that negatively regulates ODC activity and intracellular polyamine biosynthesis and uptake in response to increased intracellular polyamine levels. Binds to ODC monomers, inhibiting the assembly of the functional ODC homodimers. Does not target the ODC monomers for degradation, which allows a protein synthesis-independent restoration of ODC activity. This is Ornithine decarboxylase antizyme 2 (oaz1b) from Danio rerio (Zebrafish).